We begin with the raw amino-acid sequence, 327 residues long: Malate dehydrogenase (327 aa).

11 to 17 lines the NAD(+) pocket; it reads GAAGQIS. Substrate contacts are provided by Arg92 and Arg98. NAD(+)-binding positions include Asn105, Gln112, and 129-131; that span reads VGN. 2 residues coordinate substrate: Asn131 and Arg162. The active-site Proton acceptor is His187.

Belongs to the LDH/MDH superfamily. MDH type 2 family.

The enzyme catalyses (S)-malate + NAD(+) = oxaloacetate + NADH + H(+). Its function is as follows. Catalyzes the reversible oxidation of malate to oxaloacetate. The sequence is that of Malate dehydrogenase from Saccharophagus degradans (strain 2-40 / ATCC 43961 / DSM 17024).